Reading from the N-terminus, the 433-residue chain is MRMIDIIEKKRDGHTLTTEEINFFIGGYVKGDIPDYQASSLAMAIYFQDMNDDERAALTMAMVNSGDMIDLSDIKGVKVDKHSTGGVGDTTTLVLAPLVAAVDVPVAKMSGRGLGHTGGTIDKLEAIDGFHVEIDEATFVKLVNENKVAVVGQSGNLTPADKKLYALRDVTGTVNSIPLIASSIMSKKIAAGADAIVLDVKTGSGAFMKTLEDAEALAHAMVRIGNNVGRNTMAIISDMNQPLGRAIGNALELQEAIDTLKGQGPKDLTELVLTLGSQMVVLANKAETLEEARALLIEAINSGAALEKFKTFIKNQGGDETVIDHPERLPQAQYQIEYKAKKSGYVTELVSNDIGVASMMLGAGRLTKEDDIDLAVGIVLNKKIGDKVEEGESLLTIHSNRQDVDDVVKKLDSSITIADHVVSPTLIHKIITE.

81 to 83 (KHS) is a phosphate binding site. Residues glycine 88 and threonine 90 each coordinate K(+). Phosphate-binding positions include threonine 92, 108–110 (KMS), and threonine 120. Residues arginine 168 and lysine 187 each contribute to the substrate site. K(+) contacts are provided by leucine 243, alanine 246, and glutamate 255.

Belongs to the thymidine/pyrimidine-nucleoside phosphorylase family. As to quaternary structure, homodimer. It depends on K(+) as a cofactor.

It carries out the reaction uridine + phosphate = alpha-D-ribose 1-phosphate + uracil. The enzyme catalyses thymidine + phosphate = 2-deoxy-alpha-D-ribose 1-phosphate + thymine. The catalysed reaction is 2'-deoxyuridine + phosphate = 2-deoxy-alpha-D-ribose 1-phosphate + uracil. Catalyzes phosphorolysis of the pyrimidine nucleosides uridine, thymidine and 2'-deoxyuridine with the formation of the corresponding pyrimidine base and ribose-1-phosphate. The sequence is that of Pyrimidine-nucleoside phosphorylase (pdp) from Staphylococcus aureus (strain NCTC 8325 / PS 47).